The following is a 339-amino-acid chain: Anthranilate phosphoribosyltransferase (339 aa).

5-phospho-alpha-D-ribose 1-diphosphate-binding positions include G80, 83-84 (GD), T88, 90-93 (NIST), 108-116 (KHGNRSVSS), and S120. Anthranilate is bound at residue G80. S92 serves as a coordination point for Mg(2+). Residue N111 coordinates anthranilate. R166 contributes to the anthranilate binding site. Positions 225 and 226 each coordinate Mg(2+).

This sequence belongs to the anthranilate phosphoribosyltransferase family. In terms of assembly, homodimer. Mg(2+) serves as cofactor.

The enzyme catalyses N-(5-phospho-beta-D-ribosyl)anthranilate + diphosphate = 5-phospho-alpha-D-ribose 1-diphosphate + anthranilate. Its pathway is amino-acid biosynthesis; L-tryptophan biosynthesis; L-tryptophan from chorismate: step 2/5. Functionally, catalyzes the transfer of the phosphoribosyl group of 5-phosphorylribose-1-pyrophosphate (PRPP) to anthranilate to yield N-(5'-phosphoribosyl)-anthranilate (PRA). The protein is Anthranilate phosphoribosyltransferase of Alkaliphilus metalliredigens (strain QYMF).